We begin with the raw amino-acid sequence, 547 residues long: ATP synthase subunit beta, mitochondrial (547 aa).

The N-terminal 45 residues, 1 to 45 (MASRRLLSSFLRSSTRRSLRPSFSNPRPSFLTSYCSSPASILRRY), are a transit peptide targeting the mitochondrion. The segment covering 52–62 (KEPAASKPAGT) has biased composition (low complexity). Residues 52 to 74 (KEPAASKPAGTAGTGKGTITDEK) form a disordered region. Residue 226 to 233 (GGDWVGKT) participates in ATP binding.

Belongs to the ATPase alpha/beta chains family. In terms of assembly, F-type ATPases have 2 components, CF(1) - the catalytic core - and CF(0) - the membrane proton channel. CF(1) has five subunits: alpha(3), beta(3), gamma(1), delta(1), epsilon(1). CF(0) has three main subunits: a, b and c.

It localises to the mitochondrion. The protein localises to the mitochondrion inner membrane. The enzyme catalyses ATP + H2O + 4 H(+)(in) = ADP + phosphate + 5 H(+)(out). Its function is as follows. Mitochondrial membrane ATP synthase (F(1)F(0) ATP synthase or Complex V) produces ATP from ADP in the presence of a proton gradient across the membrane which is generated by electron transport complexes of the respiratory chain. F-type ATPases consist of two structural domains, F(1) - containing the extramembraneous catalytic core, and F(0) - containing the membrane proton channel, linked together by a central stalk and a peripheral stalk. During catalysis, ATP synthesis in the catalytic domain of F(1) is coupled via a rotary mechanism of the central stalk subunits to proton translocation. Subunits alpha and beta form the catalytic core in F(1). Rotation of the central stalk against the surrounding alpha(3)beta(3) subunits leads to hydrolysis of ATP in three separate catalytic sites on the beta subunits. The polypeptide is ATP synthase subunit beta, mitochondrial (ATPB) (Daucus carota (Wild carrot)).